The following is a 160-amino-acid chain: Small ribosomal subunit protein uS7 (160 aa).

The protein belongs to the universal ribosomal protein uS7 family. As to quaternary structure, part of the 30S ribosomal subunit. Contacts proteins S9 and S11.

Its function is as follows. One of the primary rRNA binding proteins, it binds directly to 16S rRNA where it nucleates assembly of the head domain of the 30S subunit. Is located at the subunit interface close to the decoding center, probably blocks exit of the E-site tRNA. The chain is Small ribosomal subunit protein uS7 from Ehrlichia chaffeensis (strain ATCC CRL-10679 / Arkansas).